The sequence spans 204 residues: FMN-dependent NADH:quinone oxidoreductase (204 aa).

Residues Ser-10 and 16–18 contribute to the FMN site; that span reads SKS.

It belongs to the azoreductase type 1 family. In terms of assembly, homodimer. The cofactor is FMN.

It catalyses the reaction 2 a quinone + NADH + H(+) = 2 a 1,4-benzosemiquinone + NAD(+). The catalysed reaction is N,N-dimethyl-1,4-phenylenediamine + anthranilate + 2 NAD(+) = 2-(4-dimethylaminophenyl)diazenylbenzoate + 2 NADH + 2 H(+). Quinone reductase that provides resistance to thiol-specific stress caused by electrophilic quinones. Functionally, also exhibits azoreductase activity. Catalyzes the reductive cleavage of the azo bond in aromatic azo compounds to the corresponding amines. The chain is FMN-dependent NADH:quinone oxidoreductase from Ruegeria pomeroyi (strain ATCC 700808 / DSM 15171 / DSS-3) (Silicibacter pomeroyi).